A 203-amino-acid polypeptide reads, in one-letter code: Ras-related protein Rab-13 (203 aa).

GTP is bound by residues Ser-17, Gly-18, Gly-20, Lys-21, Thr-22, Cys-23, and Thr-40. A Mg(2+)-binding site is contributed by Thr-22. The Switch 1 signature appears at 31-45; that stretch reads DNFNSTYISTIGIDF. Thr-40 lines the Mg(2+) pocket. Residues Lys-46 and Lys-58 each participate in a glycyl lysine isopeptide (Lys-Gly) (interchain with G-Cter in ubiquitin) cross-link. A Mg(2+)-binding site is contributed by Asp-63. Positions 63–80 match the Switch 2 motif; that stretch reads DTAGQERFKTITTAYYRG. GTP-binding residues include Gly-66, Asn-121, Lys-122, Asp-124, Ala-152, and Lys-153. A disordered region spans residues 173-203; the sequence is TGGRRSGNSSKPSSTDLKVSDKKNSNKCSLG. Ser-178 is modified (phosphoserine). Over residues 178–189 the composition is skewed to polar residues; the sequence is SGNSSKPSSTDL. Residue Cys-200 is modified to Cysteine methyl ester. The S-geranylgeranyl cysteine moiety is linked to residue Cys-200. A propeptide spans 201-203 (removed in mature form); that stretch reads SLG.

It belongs to the small GTPase superfamily. Rab family. In terms of assembly, interacts (GTP-bound form) with MICALL2; competes with RAB8A and is involved in tight junctions assembly. Interacts (GTP-bound form) with MICALL1. Interacts (GTP-bound form) with MICAL1, MICAL3, MICALCL, EHBP1 and EHBP1L1; ternary complexes of RAB8A, RAB13 and either MICAL1 or EHBP1L1 are possible. Interacts with PRKACA; downstream effector of RAB13 involved in tight junction assembly. Interacts with GRB2; may recruit RAB13 to the leading edge of migrating endothelial cells where it can activate RHOA. Interacts (isoprenylated form) with PDE6D; dissociates RAB13 from membranes. Interacts with BICDL2/BICDR2. Interacts with LEPROT and LEPROTL1. Mg(2+) is required as a cofactor. In terms of processing, ubiquitinated via 'Lys-11'-linked ubiquitination on Lys-46 and Lys-58; impairing the recruitment of guanosine diphosphate (GDP) dissociation inhibitor 1/GDI1. Highest levels found in lung, kidney, whole brain and spinal cord. Expressed in all tissues tested including Sertoli and germ cells (at protein level). Also detected in osteoclasts.

It localises to the cell membrane. The protein localises to the cytoplasmic vesicle membrane. It is found in the cell junction. Its subcellular location is the tight junction. The protein resides in the golgi apparatus. It localises to the trans-Golgi network membrane. The protein localises to the recycling endosome membrane. It is found in the cell projection. Its subcellular location is the lamellipodium. It carries out the reaction GTP + H2O = GDP + phosphate + H(+). Its activity is regulated as follows. Regulated by guanine nucleotide exchange factors (GEFs) including DENND1C, which promote the exchange of bound GDP for free GTP. Regulated by GTPase activating proteins (GAPs) which increase the GTP hydrolysis activity. Inhibited by GDP dissociation inhibitors (GDIs). Activated in response to insulin. In terms of biological role, the small GTPases Rab are key regulators of intracellular membrane trafficking, from the formation of transport vesicles to their fusion with membranes. Rabs cycle between an inactive GDP-bound form and an active GTP-bound form that is able to recruit to membranes different sets of downstream effectors directly responsible for vesicle formation, movement, tethering and fusion. RAB13 is involved in endocytic recycling and regulates the transport to the plasma membrane of transmembrane proteins like the tight junction protein OCLN/occludin. Thereby, it regulates the assembly and the activity of tight junctions. Moreover, it may also regulate tight junction assembly by activating the PKA signaling pathway and by reorganizing the actin cytoskeleton through the activation of the downstream effectors PRKACA and MICALL2 respectively. Through its role in tight junction assembly, may play a role in the establishment of Sertoli cell barrier. Plays also a role in angiogenesis through regulation of endothelial cells chemotaxis. Also involved in neurite outgrowth. Has also been proposed to play a role in post-Golgi membrane trafficking from the TGN to the recycling endosome. Finally, it has been involved in insulin-induced transport to the plasma membrane of the glucose transporter GLUT4 and therefore may play a role in glucose homeostasis. This Rattus norvegicus (Rat) protein is Ras-related protein Rab-13.